The primary structure comprises 208 residues: Dephospho-CoA kinase (208 aa).

The DPCK domain maps to 5–201; it reads IVALTGGIGS…QRYLALAASA (197 aa). 13–18 serves as a coordination point for ATP; that stretch reads GSGKST.

It belongs to the CoaE family.

Its subcellular location is the cytoplasm. The catalysed reaction is 3'-dephospho-CoA + ATP = ADP + CoA + H(+). Its pathway is cofactor biosynthesis; coenzyme A biosynthesis; CoA from (R)-pantothenate: step 5/5. In terms of biological role, catalyzes the phosphorylation of the 3'-hydroxyl group of dephosphocoenzyme A to form coenzyme A. This Sodalis glossinidius (strain morsitans) protein is Dephospho-CoA kinase.